Reading from the N-terminus, the 173-residue chain is Gamma-crystallin S-2 (173 aa).

Beta/gamma crystallin 'Greek key' domains lie at 2–40 (GKII…RVES) and 41–83 (DWWV…RVPT). Residues 84-88 (HTQRP) form a connecting peptide region. Beta/gamma crystallin 'Greek key' domains follow at residues 89–129 (YRMR…HVMG) and 130–172 (AYWI…RRIM).

It belongs to the beta/gamma-crystallin family.

Crystallins are the dominant structural components of the vertebrate eye lens. In Chiloscyllium indicum (Slender bamboo shark), this protein is Gamma-crystallin S-2 (GS-2).